A 429-amino-acid polypeptide reads, in one-letter code: Adenylosuccinate synthetase (429 aa).

GTP is bound by residues 12 to 18 and 40 to 42; these read GDEGKGK and GHT. Aspartate 13 functions as the Proton acceptor in the catalytic mechanism. Mg(2+) is bound by residues aspartate 13 and glycine 40. Residues 13–16, 38–41, threonine 129, arginine 143, glutamine 223, threonine 238, and arginine 302 contribute to the IMP site; these read DEGK and NAGH. The active-site Proton donor is the histidine 41. Residue 298–304 participates in substrate binding; the sequence is TVTGRPR. GTP contacts are provided by residues arginine 304, 330-332, and 412-414; these read KLD and STS.

Belongs to the adenylosuccinate synthetase family. In terms of assembly, homodimer. It depends on Mg(2+) as a cofactor.

The protein resides in the cytoplasm. It carries out the reaction IMP + L-aspartate + GTP = N(6)-(1,2-dicarboxyethyl)-AMP + GDP + phosphate + 2 H(+). The protein operates within purine metabolism; AMP biosynthesis via de novo pathway; AMP from IMP: step 1/2. Plays an important role in the de novo pathway of purine nucleotide biosynthesis. Catalyzes the first committed step in the biosynthesis of AMP from IMP. In Paramagnetospirillum magneticum (strain ATCC 700264 / AMB-1) (Magnetospirillum magneticum), this protein is Adenylosuccinate synthetase.